The primary structure comprises 1071 residues: MTSPAKFKKDKEIIAEYDTQVKEIRAQLTEQMKCLDQQCELRVQLLQDLQDFFRKKAEIEMDYSRNLEKLAERFLAKTRSTKDQQFKKDQNVLSPVNCWNLLLNQVKRESRDHTTLSDIYLNNIIPRFVQVSEDSGRLFKKSKEVGQQLQDDLMKVLNELYSVMKTYHMYNADSISAQSKLKEAEKQEEKQIGKSVKQEDRQTPRSPDSTANVRIEEKHVRRSSVKKIEKMKEKRQAKYTENKLKAIKARNEYLLALEATNASVFKYYIHDLSDIIDQCCDLGYHASLNRALRTFLSAELNLEQSKHEGLDAIENAVENLDATSDKQRLMEMYNNVFCPPMKFEFQPHMGDMASQLCAQQPVQSELVQRCQQLQSRLSTLKIENEEVKKTMEATLQTIQDIVTVEDFDVSDCFQYSNSMESVKSTVSETFMSKPSIAKRRANQQETEQFYFTKMKEYLEGRNLITKLQAKHDLLQKTLGESQRTDCSLARRSSTVRKQDSSQAIPLVVESCIRFISRHGLQHEGIFRVSGSQVEVNDIKNAFERGEDPLAGDQNDHDMDSIAGVLKLYFRGLEHPLFPKDIFHDLIACVTMDNLQERAVHIRKVLLVLPKPTLIIMRYLFAFLNHLSQFSEENMMDPYNLAICFGPSLMSVPEGHDQVSCQAHVNELIKTIIIQHENIFPNPRELEGPIYSRGGSMEDYCDSTHGETTSAEDSTQDVTAEHHTSDDECEPIEAIAKFDYVGRTARELSFKKGASLLLYQRASDDWWEGRHNGIDGLIPHQYIVVQDTEDGVVERSSPKSEIEVMSEPPEEKVTARTGASCPSGGHVADIYLANINKQRKRPESGSIRKAFRSDSHGLGSSLTDSSSLGVGASCRPSSQPIMSQNLPKEGPDKCSISGHGSLNSISRHSSLKNRMDSPQIRKTATAGRSKSFNNHRPMDPEVIAQDIEATMNSALNELQELERQSSAKHTPDVVLDTLEPLKTSPVVAPTSEPSSPLHTQLLKDPEPAFQRSASTAGDIACAFRPVKSVKMAAPVKPPATRPKPTVFPKTNATSPGVNSSASPQATDKSCTV.

The 304-residue stretch at 22 to 325 folds into the F-BAR domain; that stretch reads KEIRAQLTEQ…AVENLDATSD (304 aa). Over residues 181–203 the composition is skewed to basic and acidic residues; the sequence is LKEAEKQEEKQIGKSVKQEDRQT. Residues 181–211 are disordered; the sequence is LKEAEKQEEKQIGKSVKQEDRQTPRSPDSTA. Ser206 is subject to Phosphoserine. Residues 363 to 401 are a coiled coil; sequence QSELVQRCQQLQSRLSTLKIENEEVKKTMEATLQTIQDI. Ser427, Ser500, Ser691, and Ser695 each carry phosphoserine. Residues 489–679 enclose the Rho-GAP domain; sequence ARRSSTVRKQ…TIIIQHENIF (191 aa). Positions 700–726 are disordered; sequence CDSTHGETTSAEDSTQDVTAEHHTSDD. Residues 705-717 are compositionally biased toward polar residues; sequence GETTSAEDSTQDV. Position 724 is a phosphoserine (Ser724). Positions 728–787 constitute an SH3 domain; that stretch reads CEPIEAIAKFDYVGRTARELSFKKGASLLLYQRASDDWWEGRHNGIDGLIPHQYIVVQDT. At Ser795 the chain carries Phosphoserine. Disordered stretches follow at residues 795-819 and 838-918; these read SSPK…TGAS and RKRP…DSPQ. A compositionally biased stretch (low complexity) spans 855 to 868; the sequence is HGLGSSLTDSSSLG. Polar residues-rich tracts occupy residues 874–885 and 897–907; these read RPSSQPIMSQNL and GHGSLNSISRH. Ser916 carries the phosphoserine modification. The residue at position 927 (Arg927) is a Symmetric dimethylarginine; by PRMT5. At Ser930 the chain carries Phosphoserine. The stretch at 940-968 forms a coiled coil; sequence EVIAQDIEATMNSALNELQELERQSSAKH. Positions 984-1012 are disordered; the sequence is PVVAPTSEPSSPLHTQLLKDPEPAFQRSA. 4 positions are modified to phosphoserine: Ser990, Ser994, Ser1013, and Ser1027. The segment at 1029-1071 is disordered; it reads KMAAPVKPPATRPKPTVFPKTNATSPGVNSSASPQATDKSCTV. A compositionally biased stretch (polar residues) spans 1047 to 1071; that stretch reads PKTNATSPGVNSSASPQATDKSCTV.

As to quaternary structure, homodimer. Forms a heterooligomer with SRGAP1 and SRGAP3 through its F-BAR domain. Interacts (via SH3 domain) with GPHN. Interacts (via SH3 domain) with FMNL1 (activated by RAC1); regulates the actin filament severing activity of FMNL1 and actin dynamics. Interacts (via SH3 domain) with FMNL3. Interacts with RAC1; specifically stimulates RAC1 GTPase activity. Interacts (via F-BAR domain) with HOMER1. Interacts with ROBO1 and ROBO2. Interacts with FASLG. Interacts with PRMT5. Methylation at Arg-927 is required for the stimulation of cell migration, dimerization and localization at the plasma membrane protrusions.

Its subcellular location is the cell membrane. The protein localises to the cell projection. The protein resides in the dendritic spine. It is found in the postsynaptic density. It localises to the postsynaptic cell membrane. Its subcellular location is the lamellipodium. The protein localises to the cytoplasmic vesicle. The protein resides in the phagosome. It is found in the nucleus. It localises to the cytoplasm. Its subcellular location is the cytosol. In terms of biological role, postsynaptic RAC1 GTPase activating protein (GAP) that plays a key role in neuronal morphogenesis and migration mainly during development of the cerebral cortex. Regulates excitatory and inhibitory synapse maturation and density in cortical pyramidal neurons. SRGAP2/SRGAP2A limits excitatory and inhibitory synapse density through its RAC1-specific GTPase activating activity, while it promotes maturation of both excitatory and inhibitory synapses through its ability to bind to the postsynaptic scaffolding protein HOMER1 at excitatory synapses, and the postsynaptic protein GPHN at inhibitory synapses. Mechanistically, acts by binding and deforming membranes, thereby regulating actin dynamics to regulate cell migration and differentiation. Promotes cell repulsion and contact inhibition of locomotion: localizes to protrusions with curved edges and controls the duration of RAC1 activity in contact protrusions. In non-neuronal cells, may also play a role in cell migration by regulating the formation of lamellipodia and filopodia. This chain is SLIT-ROBO Rho GTPase-activating protein 2, found in Mus musculus (Mouse).